Consider the following 157-residue polypeptide: MAEVANNEAQAPQFNIQRIYTKDLSFETPNSPAVFQKEWNPEVKLDLDTRSNKLSDDTYEVILSLTVTAKNGEDTAFLCEVQQAGIFSIVGLTEQQLAHSLGAYCPNVLFPYARELVGNLVGRGTFPQLNLAPVNFDALFAQYVQQRQAAATEEATA.

It belongs to the SecB family. As to quaternary structure, homotetramer, a dimer of dimers. One homotetramer interacts with 1 SecA dimer.

The protein resides in the cytoplasm. One of the proteins required for the normal export of preproteins out of the cell cytoplasm. It is a molecular chaperone that binds to a subset of precursor proteins, maintaining them in a translocation-competent state. It also specifically binds to its receptor SecA. The sequence is that of Protein-export protein SecB from Shewanella frigidimarina (strain NCIMB 400).